The chain runs to 178 residues: ATP-dependent protease subunit HslV (178 aa).

Thr7 is an active-site residue. Residues Gly162, Cys165, and Thr168 each contribute to the Na(+) site.

The protein belongs to the peptidase T1B family. HslV subfamily. As to quaternary structure, a double ring-shaped homohexamer of HslV is capped on each side by a ring-shaped HslU homohexamer. The assembly of the HslU/HslV complex is dependent on binding of ATP.

The protein localises to the cytoplasm. It carries out the reaction ATP-dependent cleavage of peptide bonds with broad specificity.. Its activity is regulated as follows. Allosterically activated by HslU binding. Its function is as follows. Protease subunit of a proteasome-like degradation complex believed to be a general protein degrading machinery. The sequence is that of ATP-dependent protease subunit HslV from Ralstonia nicotianae (strain ATCC BAA-1114 / GMI1000) (Ralstonia solanacearum).